Consider the following 245-residue polypeptide: Ubiquinone/menaquinone biosynthesis C-methyltransferase UbiE (245 aa).

S-adenosyl-L-methionine is bound by residues Thr-71, Asp-92, and 118–119 (DA).

It belongs to the class I-like SAM-binding methyltransferase superfamily. MenG/UbiE family.

It carries out the reaction a 2-demethylmenaquinol + S-adenosyl-L-methionine = a menaquinol + S-adenosyl-L-homocysteine + H(+). It catalyses the reaction a 2-methoxy-6-(all-trans-polyprenyl)benzene-1,4-diol + S-adenosyl-L-methionine = a 5-methoxy-2-methyl-3-(all-trans-polyprenyl)benzene-1,4-diol + S-adenosyl-L-homocysteine + H(+). It functions in the pathway quinol/quinone metabolism; menaquinone biosynthesis; menaquinol from 1,4-dihydroxy-2-naphthoate: step 2/2. It participates in cofactor biosynthesis; ubiquinone biosynthesis. Its function is as follows. Methyltransferase required for the conversion of demethylmenaquinol (DMKH2) to menaquinol (MKH2) and the conversion of 2-polyprenyl-6-methoxy-1,4-benzoquinol (DDMQH2) to 2-polyprenyl-3-methyl-6-methoxy-1,4-benzoquinol (DMQH2). This Neisseria meningitidis serogroup B (strain ATCC BAA-335 / MC58) protein is Ubiquinone/menaquinone biosynthesis C-methyltransferase UbiE.